We begin with the raw amino-acid sequence, 428 residues long: Putative aspergillopepsin A-like aspartic endopeptidase AFUA_2G15950 (428 aa).

Positions 1-19 (MHSLQSFLFLLLLGYGVFA) are cleaved as a signal peptide. A propeptide spans 20 to 90 (APTSPQAQSQ…GTAANLVTDV (71 aa)) (activation peptide). Residues 110–425 (FVSPVTIGGQ…DLRGPSIGLA (316 aa)) form the Peptidase A1 domain. The active site involves aspartate 126. N-linked (GlcNAc...) asparagine glycosylation is present at asparagine 276. Residue aspartate 312 is part of the active site. Asparagine 380 is a glycosylation site (N-linked (GlcNAc...) asparagine).

The protein belongs to the peptidase A1 family.

Its subcellular location is the secreted. The sequence is that of Putative aspergillopepsin A-like aspartic endopeptidase AFUA_2G15950 from Aspergillus fumigatus (strain ATCC MYA-4609 / CBS 101355 / FGSC A1100 / Af293) (Neosartorya fumigata).